The sequence spans 248 residues: Putative TrmH family tRNA/rRNA methyltransferase (248 aa).

The S-adenosyl-L-methionine site is built by Gly-196, Ile-216, and Leu-225.

This sequence belongs to the class IV-like SAM-binding methyltransferase superfamily. RNA methyltransferase TrmH family.

The chain is Putative TrmH family tRNA/rRNA methyltransferase from Staphylococcus aureus (strain COL).